Here is a 148-residue protein sequence, read N- to C-terminus: Leghemoglobin-1 (148 aa).

In terms of domain architecture, Globin spans 2–146 (GFTDKQEALV…LATAIKKAMK (145 aa)). Nitrated tyrosine occurs at positions 24 and 29. S44 is a binding site for heme b. S44 carries the phosphoserine modification. Position 61 (H61) interacts with O2. Heme b-binding residues include H93 and K96. The residue at position 134 (Y134) is a Nitrated tyrosine.

Belongs to the plant globin family. As to quaternary structure, monomer. In terms of processing, nitrated in effective nodules and particularly in hypoxic conditions; this mechanism may play a protective role in the symbiosis by buffering toxic peroxynitrite NO(2)(-). Nitration level decrease during nodule senescence. Phosphorylation at Ser-44 disrupts the molecular environment of its porphyrin ring oxygen binding pocket, thus leading to a reduced oxygen consumption and to the delivery of oxygen O(2) to symbiosomes. Root nodules.

It localises to the cytoplasm. The protein localises to the cytosol. It is found in the nucleus. Functionally, leghemoglobin that reversibly binds oxygen O(2) through a pentacoordinated heme iron. In root nodules, facilitates the diffusion of oxygen to the bacteroids while preventing the bacterial nitrogenase from being inactivated by buffering dioxygen, nitric oxide and carbon monoxide, and promoting the formation of reactive oxygen species (ROS, e.g. H(2)O(2)). This role is essential for symbiotic nitrogen fixation (SNF). This chain is Leghemoglobin-1, found in Pisum sativum (Garden pea).